A 116-amino-acid polypeptide reads, in one-letter code: Early 4 ORF3 protein (116 aa).

It belongs to the adenoviridae E4 ORF3 family. As to quaternary structure, homodimer. Multimerizes through C-terminus tail by reciprocal or nonreciprocal interactions. Interacts with host PML isoform 2 C-terminal disordered region. Interacts with E1B-55k; this interaction is necessary for E1B 55 kDa protein to localize to the nuclear matrix fraction of the cell. May interact with host TRIM24, CREBBP, EP300, PRKDC and the MRN complex MRE11/RAD50/NBS1; these interactions may happen through nuclear bodies complexes.

The protein localises to the host nucleus. Functionally, forms a multivalent network in host nucleus that inhibits nuclear bodies and prevents antiviral cellular activities. The network is made of multimerized dimers and surrounds adenovirus replication centers and nucleolus. Plays a role in splicing of the major late transcript. Prevents viral genome concatemer formation. In Human adenovirus C serotype 2 (HAdV-2), this protein is Early 4 ORF3 protein.